Reading from the N-terminus, the 75-residue chain is Exodeoxyribonuclease 7 small subunit (75 aa).

It belongs to the XseB family. In terms of assembly, heterooligomer composed of large and small subunits.

Its subcellular location is the cytoplasm. The catalysed reaction is Exonucleolytic cleavage in either 5'- to 3'- or 3'- to 5'-direction to yield nucleoside 5'-phosphates.. Bidirectionally degrades single-stranded DNA into large acid-insoluble oligonucleotides, which are then degraded further into small acid-soluble oligonucleotides. In Chlamydia felis (strain Fe/C-56) (Chlamydophila felis), this protein is Exodeoxyribonuclease 7 small subunit.